The following is a 377-amino-acid chain: uncharacterized protein (377 aa).

The next 2 helical transmembrane spans lie at 23 to 43 (LKFI…FIAY) and 251 to 271 (GSFI…SISY).

The protein resides in the cell membrane. This is an uncharacterized protein from Methanocaldococcus jannaschii (strain ATCC 43067 / DSM 2661 / JAL-1 / JCM 10045 / NBRC 100440) (Methanococcus jannaschii).